Reading from the N-terminus, the 31-residue chain is Cytochrome b6-f complex subunit 6 (31 aa).

The chain crosses the membrane as a helical span at residues 4–24; sequence LISYISLLAGFVIIASVFYLA.

Belongs to the PetL family. In terms of assembly, the 4 large subunits of the cytochrome b6-f complex are cytochrome b6, subunit IV (17 kDa polypeptide, PetD), cytochrome f and the Rieske protein, while the 4 small subunits are PetG, PetL, PetM and PetN. The complex functions as a dimer.

It is found in the plastid. Its subcellular location is the chloroplast thylakoid membrane. In terms of biological role, component of the cytochrome b6-f complex, which mediates electron transfer between photosystem II (PSII) and photosystem I (PSI), cyclic electron flow around PSI, and state transitions. PetL is important for photoautotrophic growth as well as for electron transfer efficiency and stability of the cytochrome b6-f complex. This is Cytochrome b6-f complex subunit 6 from Tupiella akineta (Green alga).